Here is a 1713-residue protein sequence, read N- to C-terminus: Cell wall protein AWA1 (1713 aa).

The signal sequence occupies residues 1–23 (MFNRFNKLQAALALVLYSQSALG). Asn34 carries N-linked (GlcNAc...) asparagine glycosylation. Disordered stretches follow at residues 80–117 (IAPSTSSSEVSSSITSSGSSVSGSSSITSSGSSVSSSS), 256–327 (TSTT…AESI), and 359–939 (SSGI…STAS). Over residues 256-275 (TSTTSDTYISSSSPSQVTSS) the composition is skewed to low complexity. Composition is skewed to polar residues over residues 276-327 (AEPT…AESI) and 359-368 (SSGISSSVEP). Over residues 374-939 (PSSDESISST…QSTSSASTAS (566 aa)) the composition is skewed to low complexity. N-linked (GlcNAc...) asparagine glycans are attached at residues Asn1133, Asn1241, and Asn1278. The interval 1582-1603 (KTVTSEAPKETSETSETSAAPK) is disordered. Residue Ala1692 is the site of GPI-anchor amidated alanine attachment. The propeptide at 1693–1713 (AGLNANTLNALVGIFVLAFFN) is removed in mature form.

This sequence belongs to the SRP1/TIP1 family. Post-translationally, the GPI-anchor is attached to the protein in the endoplasmic reticulum and serves to target the protein to the cell surface. There, the glucosamine-inositol phospholipid moiety is cleaved off and the GPI-modified mannoprotein is covalently attached via its lipidless GPI glycan remnant to the 1,6-beta-glucan of the outer cell wall layer.

It is found in the secreted. The protein localises to the cell wall. The protein resides in the membrane. Its function is as follows. Involved in cell wall organization and biosynthesis. Confers cell surface hydrophobicity (CSH). The chain is Cell wall protein AWA1 (AWA1) from Saccharomyces cerevisiae (strain Kyokai no. 7 / NBRC 101557) (Baker's yeast).